The sequence spans 849 residues: SMY2 homolog 2 (849 aa).

A GYF domain is found at 149–205 (ESQWKYIDSNGNIQGPFGTNNMSQWYQGGYFTPTLQICRLATSPEPFGVNDRFIRLG). 4 disordered regions span residues 305 to 505 (APLS…TTNL), 527 to 547 (DLKK…QLDR), 593 to 612 (TKIN…IKPD), and 634 to 661 (NRAS…NTSN). The segment covering 308-318 (STTSSRSNKTT) has biased composition (low complexity). The span at 319–331 (SSHEEKVPSHEEA) shows a compositional bias: basic and acidic residues. At Thr-350 the chain carries Phosphothreonine. 3 stretches are compositionally biased toward basic and acidic residues: residues 361 to 375 (TKQE…KEQN), 387 to 403 (VDRK…KSKD), and 425 to 443 (LLEE…EEQR). A coiled-coil region spans residues 410–484 (EEQKRFAKAE…EKQKELLNNI (75 aa)). Residues 444-455 (KLKKEKKLKQKQ) are compositionally biased toward basic residues. Over residues 456–479 (KKEEEKLKKKKKEEGKLEKEKQKE) the composition is skewed to basic and acidic residues. Residues 483–505 (NILTGDTETPSSENTATSITTNL) are compositionally biased toward polar residues. Residues 594–605 (KINSQSKINKAN) show a composition bias toward polar residues. The span at 644-661 (SRTPSPSSSALNSSNTSN) shows a compositional bias: low complexity.

Belongs to the SMY2/mpd2 family. In terms of assembly, interacts with ribosomes. Interacts with EAP1 and MSL5 (via the GYP domain).

The protein resides in the cytoplasm. The chain is SMY2 homolog 2 (SYH1) from Saccharomyces cerevisiae (strain ATCC 204508 / S288c) (Baker's yeast).